A 304-amino-acid polypeptide reads, in one-letter code: N-acetyl-D-glucosamine kinase (304 aa).

ATP contacts are provided by residues 4-11 (GLDIGGTK) and 133-140 (GFGGGFVL). Zn(2+) is bound by residues H157, C178, C180, and C185.

It belongs to the ROK (NagC/XylR) family. NagK subfamily.

It carries out the reaction N-acetyl-D-glucosamine + ATP = N-acetyl-D-glucosamine 6-phosphate + ADP + H(+). Its pathway is cell wall biogenesis; peptidoglycan recycling. In terms of biological role, catalyzes the phosphorylation of N-acetyl-D-glucosamine (GlcNAc) derived from cell-wall degradation, yielding GlcNAc-6-P. In Haemophilus influenzae (strain 86-028NP), this protein is N-acetyl-D-glucosamine kinase.